A 121-amino-acid chain; its full sequence is Tachykinin-3 (121 aa).

The signal sequence occupies residues 1 to 16; sequence MRIMLLFTAILAFSLA. A propeptide spanning residues 17–78 is cleaved from the precursor; that stretch reads QSFGAVCKEP…TDPKESTSPE (62 aa). Met90 bears the Methionine amide mark. A disordered region spans residues 93-121; that stretch reads RSVQPDSPTDVNQENVPSFGILKYPPRAE. Residues 94–121 constitute a propeptide that is removed on maturation; sequence SVQPDSPTDVNQENVPSFGILKYPPRAE. Over residues 96 to 108 the composition is skewed to polar residues; it reads QPDSPTDVNQENV.

This sequence belongs to the tachykinin family.

Its subcellular location is the secreted. Functionally, tachykinins are active peptides which excite neurons, evoke behavioral responses, are potent vasodilators and secretagogues, and contract (directly or indirectly) many smooth muscles. Is a critical central regulator of gonadal function. The sequence is that of Tachykinin-3 (TAC3) from Homo sapiens (Human).